Here is an 863-residue protein sequence, read N- to C-terminus: DNA-directed RNA polymerase subunit beta' (863 aa).

The tract at residues 1-83 (MSGEVAQDQP…SKKKETKASQ (83 aa)) is disordered. A compositionally biased stretch (polar residues) spans 23 to 36 (EIVNSAITVQSSAK). Residues cysteine 159, cysteine 161, cysteine 180, and cysteine 183 each contribute to the Zn(2+) site. Mg(2+) is bound by residues aspartate 621, aspartate 623, and aspartate 625.

Belongs to the RNA polymerase beta' chain family. RpoC1 subfamily. In plastids the minimal PEP RNA polymerase catalytic core is composed of four subunits: alpha, beta, beta', and beta''. When a (nuclear-encoded) sigma factor is associated with the core the holoenzyme is formed, which can initiate transcription. Mg(2+) serves as cofactor. It depends on Zn(2+) as a cofactor.

Its subcellular location is the plastid. The protein resides in the chloroplast. It carries out the reaction RNA(n) + a ribonucleoside 5'-triphosphate = RNA(n+1) + diphosphate. DNA-dependent RNA polymerase catalyzes the transcription of DNA into RNA using the four ribonucleoside triphosphates as substrates. The chain is DNA-directed RNA polymerase subunit beta' from Nephroselmis olivacea (Green alga).